We begin with the raw amino-acid sequence, 440 residues long: Protein arginine N-methyltransferase 2 (440 aa).

The interval 147–194 is disordered; that stretch reads LSSGSEDGDEEMEVQQDDDEEAPQLVSTEDVEPTVEEPKFIPPDAKEK. Residues 152-168 are compositionally biased toward acidic residues; that stretch reads EDGDEEMEVQQDDDEEA. Residues 182 to 194 are compositionally biased toward basic and acidic residues; sequence EEPKFIPPDAKEK. Residues 192–440 form the RMT2 domain; it reads KEKQVTSEEY…RYAVGTSNRL (249 aa). S-adenosyl-L-methionine-binding positions include Tyr-201, Met-230, 252–257, 273–275, 310–311, and Asp-330; these read FGMGIV, EAH, and WQ.

The protein belongs to the class I-like SAM-binding methyltransferase superfamily. RMT2 methyltransferase family. Monomer.

It localises to the cytoplasm. It is found in the nucleus. S-adenosyl-L-methionine-dependent protein-arginine N-methyltransferase that methylates the delta-nitrogen atom of arginine residues to form N5-methylarginine (type IV) in target proteins. Monomethylates ribosomal protein L12. In Gibberella zeae (strain ATCC MYA-4620 / CBS 123657 / FGSC 9075 / NRRL 31084 / PH-1) (Wheat head blight fungus), this protein is Protein arginine N-methyltransferase 2.